The primary structure comprises 297 residues: GTPase Era (297 aa).

The Era-type G domain occupies 7 to 174; it reads HSGFVSIIGR…VQVVRDLLPE (168 aa). The tract at residues 15-22 is G1; sequence GRPNVGKS. 15–22 contributes to the GTP binding site; the sequence is GRPNVGKS. The segment at 41-45 is G2; sequence QTTRN. The G3 stretch occupies residues 62-65; it reads DTPG. GTP-binding positions include 62–66 and 124–127; these read DTPGI and NKVD. Residues 124–127 form a G4 region; it reads NKVD. The G5 stretch occupies residues 153-155; the sequence is VSA. The region spanning 205–282 is the KH type-2 domain; it reads THDEVPYSVA…FLELFVRVSR (78 aa).

The protein belongs to the TRAFAC class TrmE-Era-EngA-EngB-Septin-like GTPase superfamily. Era GTPase family. Monomer.

Its subcellular location is the cytoplasm. The protein resides in the cell inner membrane. In terms of biological role, an essential GTPase that binds both GDP and GTP, with rapid nucleotide exchange. Plays a role in 16S rRNA processing and 30S ribosomal subunit biogenesis and possibly also in cell cycle regulation and energy metabolism. In Geotalea daltonii (strain DSM 22248 / JCM 15807 / FRC-32) (Geobacter daltonii), this protein is GTPase Era.